Reading from the N-terminus, the 323-residue chain is Magnesium transporter NIPA1 (323 aa).

The Extracellular segment spans residues Met-1–Ala-21. The chain crosses the membrane as a helical span at residues Val-22–Leu-42. Residues Gln-43–Asp-60 are Cytoplasmic-facing. Residues Ile-61–Tyr-81 traverse the membrane as a helical segment. Residue Thr-82 is a topological domain, extracellular. The chain crosses the membrane as a helical span at residues Ala-83–Leu-103. Topologically, residues Ala-104 to Lys-111 are cytoplasmic. Residues Leu-112–Ile-132 form a helical membrane-spanning segment. Residues His-133–Pro-153 are Extracellular-facing. Residues Val-154–Ala-174 traverse the membrane as a helical segment. At Pro-175 to His-177 the chain is on the cytoplasmic side. The helical transmembrane segment at Gly-178–Pro-198 threads the bilayer. Residues Ser-199–Gln-218 lie on the Extracellular side of the membrane. The helical transmembrane segment at Arg-219–Phe-239 threads the bilayer. Over Arg-240–Val-253 the chain is Cytoplasmic. A helical membrane pass occupies residues Phe-254–Phe-274. Residues Arg-275 to Asp-284 lie on the Extracellular side of the membrane. The chain crosses the membrane as a helical span at residues Phe-285–Phe-305. At Lys-306–Asp-323 the chain is on the cytoplasmic side.

It belongs to the NIPA family. Homodimer. In terms of tissue distribution, widely expressed. Predominantly expressed in neuronal tissues. Brain, heart, kidney, liver and colon (at protein level).

Its subcellular location is the cell membrane. The protein localises to the early endosome. It carries out the reaction Mg(2+)(in) = Mg(2+)(out). Acts as a Mg(2+) transporter. Can also transport other divalent cations such as Fe(2+), Sr(2+), Ba(2+), Zn(2+) and Co(2+) but to a much less extent than Mg(2+). This Mus musculus (Mouse) protein is Magnesium transporter NIPA1 (Nipa1).